Reading from the N-terminus, the 254-residue chain is Thiazole synthase (254 aa).

Catalysis depends on lysine 95, which acts as the Schiff-base intermediate with DXP. 1-deoxy-D-xylulose 5-phosphate-binding positions include glycine 156, 182–183 (AG), and 204–205 (NT).

Belongs to the ThiG family. In terms of assembly, homotetramer. Forms heterodimers with either ThiH or ThiS.

The protein resides in the cytoplasm. It catalyses the reaction [ThiS sulfur-carrier protein]-C-terminal-Gly-aminoethanethioate + 2-iminoacetate + 1-deoxy-D-xylulose 5-phosphate = [ThiS sulfur-carrier protein]-C-terminal Gly-Gly + 2-[(2R,5Z)-2-carboxy-4-methylthiazol-5(2H)-ylidene]ethyl phosphate + 2 H2O + H(+). The protein operates within cofactor biosynthesis; thiamine diphosphate biosynthesis. Catalyzes the rearrangement of 1-deoxy-D-xylulose 5-phosphate (DXP) to produce the thiazole phosphate moiety of thiamine. Sulfur is provided by the thiocarboxylate moiety of the carrier protein ThiS. In vitro, sulfur can be provided by H(2)S. The polypeptide is Thiazole synthase (Shewanella sp. (strain W3-18-1)).